Consider the following 601-residue polypeptide: 66 kDa stress protein (601 aa).

WD repeat units follow at residues 56-95, 100-143, 145-184, 187-226, 233-272, 318-357, 435-478, 483-522, 526-565, and 569-600; these read EHAQPATVAKYAPSGFYIASGDLSGTLRIWDTTQLEHPLK, VLSG…GEIT, HSKAIASCDFKATRPFRVITGAEDFQANWFEGPPFKFKHA, EHTRFLTCVRFSPDGEKVLTVGLDKKGFILDGKTGEKVGA, AHALGIYSCSWSPDSKKVLTVSADKSAKIWDDKGTLLTTF, GHNKLVTSLAFDTASKALYSGSYDGVILQWNLETGIAVPI, ASTT…LSEQ, GHRGFLTAIAYSPDGKHFASADQNRDIFVWDKASRKIKVE, YHNARVTSLAWNSNSNNIVTGSLDSHVYVWSVSEPSKHIA, and AHRGGVNAVLWVDEHTVASAGLDCSIKTWTIK.

The protein belongs to the WD repeat AIP1 family.

Functionally, associated with the process of cyst formation. This Physarum polycephalum (Slime mold) protein is 66 kDa stress protein.